Consider the following 353-residue polypeptide: Photosystem II protein D1 (353 aa).

Threonine 2 is modified (N-acetylthreonine). At threonine 2 the chain carries Phosphothreonine. The next 3 membrane-spanning stretches (helical) occupy residues tyrosine 29–serine 46, histidine 118–leucine 133, and tryptophan 142–alanine 156. Histidine 118 provides a ligand contact to chlorophyll a. Tyrosine 126 lines the pheophytin a pocket. [CaMn4O5] cluster-binding residues include aspartate 170 and glutamate 189. A helical membrane pass occupies residues phenylalanine 197–leucine 218. A chlorophyll a-binding site is contributed by histidine 198. Residues histidine 215 and serine 264–phenylalanine 265 each bind a quinone. Position 215 (histidine 215) interacts with Fe cation. Histidine 272 contacts Fe cation. A helical transmembrane segment spans residues phenylalanine 274–leucine 288. [CaMn4O5] cluster contacts are provided by histidine 332, glutamate 333, aspartate 342, and alanine 344. A propeptide spanning residues valine 345–glycine 353 is cleaved from the precursor.

The protein belongs to the reaction center PufL/M/PsbA/D family. As to quaternary structure, PSII is composed of 1 copy each of membrane proteins PsbA, PsbB, PsbC, PsbD, PsbE, PsbF, PsbH, PsbI, PsbJ, PsbK, PsbL, PsbM, PsbT, PsbX, PsbY, PsbZ, Psb30/Ycf12, at least 3 peripheral proteins of the oxygen-evolving complex and a large number of cofactors. It forms dimeric complexes. The D1/D2 heterodimer binds P680, chlorophylls that are the primary electron donor of PSII, and subsequent electron acceptors. It shares a non-heme iron and each subunit binds pheophytin, quinone, additional chlorophylls, carotenoids and lipids. D1 provides most of the ligands for the Mn4-Ca-O5 cluster of the oxygen-evolving complex (OEC). There is also a Cl(-1) ion associated with D1 and D2, which is required for oxygen evolution. The PSII complex binds additional chlorophylls, carotenoids and specific lipids. is required as a cofactor. Tyr-161 forms a radical intermediate that is referred to as redox-active TyrZ, YZ or Y-Z. In terms of processing, C-terminally processed by CTPA; processing is essential to allow assembly of the oxygen-evolving complex and thus photosynthetic growth.

The protein localises to the plastid. The protein resides in the chloroplast thylakoid membrane. The enzyme catalyses 2 a plastoquinone + 4 hnu + 2 H2O = 2 a plastoquinol + O2. Its function is as follows. Photosystem II (PSII) is a light-driven water:plastoquinone oxidoreductase that uses light energy to abstract electrons from H(2)O, generating O(2) and a proton gradient subsequently used for ATP formation. It consists of a core antenna complex that captures photons, and an electron transfer chain that converts photonic excitation into a charge separation. The D1/D2 (PsbA/PsbD) reaction center heterodimer binds P680, the primary electron donor of PSII as well as several subsequent electron acceptors. This chain is Photosystem II protein D1, found in Aethionema cordifolium (Lebanon stonecress).